We begin with the raw amino-acid sequence, 366 residues long: Cyclin-O protein A (366 aa).

Disordered regions lie at residues 18-55 (AAFS…GIKK) and 80-99 (YETP…PYDS).

The protein belongs to the cyclin family.

The protein localises to the cytoplasm. In terms of biological role, specifically required for generation of multiciliated cells, possibly by promoting a cell cycle state compatible with centriole amplification and maturation. Acts downstream of mcidas to promote mother centriole amplification and maturation in preparation for apical docking. This chain is Cyclin-O protein A (ccno-a), found in Xenopus laevis (African clawed frog).